A 455-amino-acid polypeptide reads, in one-letter code: MAVRIARFLGLSTVAYLALANGIDARDTISRDVIILGGGSSGTYAAIRLRDQGKTVAVVERNNYLGGHGETYYTEDNTPLNFGVEGFFNTTVTRNYLERLQVPYGRRDPAPAHEDYVNLNTGQRTEYTPGQLQDREAFAKWVDAISQFGFLDDGVYRIPEPVPEDLISPFADFVKKYHLEDAVYALFSHTSGDVLEMITLYVIQYIGVPHAAALNEGYVRPIEGIAALYKSAGKELGSDVLLETTPEAVQRFEDGVEVIVRSADGTKTLLKGKQLLVTIPPLLENLHGFPLSDQESRLFSKWQYHQYWAALVNDTGLPDDVNIVNVDTERLYGVPEEPFIWRLDNHWAPGYHNIKLVGGSEFGEDEAKAYMYERLDLLHAEGTYATHKPEIVKFASHTPVTMFVSAEEIRGGFYRQLYELQGLNSTFWTGATWASDYSTLLWGYTDEVLDQMASS.

Residues 1–25 form the signal peptide; sequence MAVRIARFLGLSTVAYLALANGIDA.

This sequence belongs to the beta-cyclopiazonate dehydrogenase family. FAD serves as cofactor.

The catalysed reaction is beta-cyclopiazonate + A = alpha-cyclopiazonate + AH2. Beta-cyclopiazonate dehydrogenase involved in the synthesis of the fungal neurotoxin alpha-cyclopiazonic acid (CPA). CpaO carries out the dehydrogenation of beta-CPA to yield an unstable enimine product, which is captured by intramolecular cyclization to create the pentacyclic fused scaffold of alpha-cyclopiazonate. The protein is Beta-cyclopiazonate dehydrogenase of Aspergillus oryzae (strain ATCC 42149 / RIB 40) (Yellow koji mold).